We begin with the raw amino-acid sequence, 79 residues long: Small ribosomal subunit protein bS18 (79 aa).

Belongs to the bacterial ribosomal protein bS18 family. Part of the 30S ribosomal subunit. Forms a tight heterodimer with protein bS6.

Functionally, binds as a heterodimer with protein bS6 to the central domain of the 16S rRNA, where it helps stabilize the platform of the 30S subunit. This is Small ribosomal subunit protein bS18 from Salinispora arenicola (strain CNS-205).